A 201-amino-acid chain; its full sequence is Putative ankyrin repeat protein YahD (201 aa).

6 ANK repeats span residues 5 to 34, 38 to 67, 71 to 100, 104 to 134, 138 to 172, and 176 to 201; these read NLPA…DINT, QGKT…DINK, TCLN…DLNC, FGGV…NVNQ, VGWT…SPHL, and YGKT…AAGA.

The protein is Putative ankyrin repeat protein YahD (yahD) of Escherichia coli (strain K12).